The following is a 364-amino-acid chain: Arabinose metabolism transcriptional repressor (364 aa).

One can recognise an HTH gntR-type domain in the interval 6–74 (LPKYLQLKQE…QGSGTFVSRP (69 aa)). Positions 34–53 (EHEIANQFQLSRHTVRQALG) form a DNA-binding region, H-T-H motif.

It is found in the cytoplasm. Its function is as follows. Transcriptional repressor of the arabinose utilization genes. The chain is Arabinose metabolism transcriptional repressor (araR) from Geobacillus stearothermophilus (Bacillus stearothermophilus).